The primary structure comprises 814 residues: MADDGDMFLNFEIGDAPIKQTVKYTGGRWRDRVKAQKGEKGGQDQSKQASTARRDTGADYYTNRAAKRQRTEDGDSGRFSKTPRTGNAAERGPPPPPTHAMKTGLVSSRLFTSNPVPVTDFEELPQAEEAEPAQPSNAPLSAEAENFLSLGLSRRVSQHLATKLEMKAPTAIQKNTIPQLVKEDSDAFLQAETGSGKTLAYLLPIVHRILALSHNEDGTPKTTKVHRNSGLFAIILAPTRELCKQIAVVLEKVLRCAPWLVCTTVIGGESKKSEKARIRKGVNILIATPGRLTDHLDNTKVLDVGTVRWLVLDEGDRMMEMGFEDDIKTIVGKIRAGTLQKKNAEGVVLDGVLPSRRVTVLCSATMKMNVQKLGEISLEDAVHITASKSDMEKDAETGAVETAFSAPAQLKQAAIVTPAKLRLVTLIALLKSTFARKGSVMKAIIFISCADSVDYHFELLKSTTPRAEPEPKPEGEAPTKPNIHIESTVAPATYITSPANPTVMLHKLHGSLAQPVRSATLKAFSECKDPAVLITTDISSRGLDVPAVELVIEYDPAFAVPDHVHRIGRTARAGRAGKAVLFLLPGSEEGYISILPKSTPIAPQLYDSILQKGFATNINVPGTESGVLETDRQSWASRAEALQLHFEQRLLAPLPGATPVFESKSEKFAASKQGKKGKKDAKKDENKTPDNPLLVSARQAFRSHIRAYATHVREERVYFDITALHLGHMAKAFGLREAPGGIGGGVSRRTHRPVQPGDKTNKTSKSVGDGTARRPKKDDDDERDFGAADEDAGRRMKEKMKMMMGNMASEFNLG.

Residues 26 to 102 (GGRWRDRVKA…PPPPPTHAMK (77 aa)) form a disordered region. 2 stretches are compositionally biased toward basic and acidic residues: residues 28–42 (RWRD…EKGG) and 69–78 (QRTEDGDSGR). The short motif at 145 to 174 (ENFLSLGLSRRVSQHLATKLEMKAPTAIQK) is the Q motif element. A Helicase ATP-binding domain is found at 178–384 (PQLVKEDSDA…EISLEDAVHI (207 aa)). 191–198 (AETGSGKT) lines the ATP pocket. The DEAD box signature appears at 313–316 (DEGD). The region spanning 422–622 (RLVTLIALLK…GFATNINVPG (201 aa)) is the Helicase C-terminal domain. Disordered regions lie at residues 464–483 (TPRA…KPNI), 662–695 (ESKS…PLLV), and 741–795 (GIGG…AGRR). Residues 467 to 477 (AEPEPKPEGEA) show a composition bias toward basic and acidic residues. The segment covering 779-790 (DDDERDFGAADE) has biased composition (acidic residues).

Belongs to the DEAD box helicase family. DDX31/DBP7 subfamily.

It localises to the nucleus. The protein localises to the nucleolus. The catalysed reaction is ATP + H2O = ADP + phosphate + H(+). Its function is as follows. ATP-binding RNA helicase involved in the biogenesis of 60S ribosomal subunits and is required for the normal formation of 25S and 5.8S rRNAs. This chain is ATP-dependent RNA helicase dbp-7 (dbp-7), found in Neurospora crassa (strain ATCC 24698 / 74-OR23-1A / CBS 708.71 / DSM 1257 / FGSC 987).